A 118-amino-acid polypeptide reads, in one-letter code: Large ribosomal subunit protein bL20 (118 aa).

This sequence belongs to the bacterial ribosomal protein bL20 family.

Its function is as follows. Binds directly to 23S ribosomal RNA and is necessary for the in vitro assembly process of the 50S ribosomal subunit. It is not involved in the protein synthesizing functions of that subunit. In Bacillus anthracis (strain CDC 684 / NRRL 3495), this protein is Large ribosomal subunit protein bL20.